The following is a 93-amino-acid chain: Mitochondrial import inner membrane translocase subunit Tim10-A (93 aa).

The Twin CX3C motif signature appears at C32 to C57. 2 disulfide bridges follow: C32/C57 and C36/C53.

It belongs to the small Tim family. As to quaternary structure, heterohexamer; composed of 3 copies of TIMM9 and 3 copies of TIMM10/TIM10A, named soluble 70 kDa complex. The complex forms a 6-bladed alpha-propeller structure and associates with the TIMM22 component of the TIM22 complex. Interacts with multi-pass transmembrane proteins in transit.

The protein resides in the mitochondrion inner membrane. Functionally, mitochondrial intermembrane chaperone that participates in the import and insertion of multi-pass transmembrane proteins into the mitochondrial inner membrane. May also be required for the transfer of beta-barrel precursors from the TOM complex to the sorting and assembly machinery (SAM complex) of the outer membrane. Acts as a chaperone-like protein that protects the hydrophobic precursors from aggregation and guide them through the mitochondrial intermembrane space. The chain is Mitochondrial import inner membrane translocase subunit Tim10-A (timm10-a) from Xenopus laevis (African clawed frog).